An 85-amino-acid chain; its full sequence is UPF0291 protein SPCG_1462 (85 aa).

Residues 62 to 85 (TPEKLRQVQREKGLHGRSLDDPNS) are disordered.

The protein belongs to the UPF0291 family.

It is found in the cytoplasm. This is UPF0291 protein SPCG_1462 from Streptococcus pneumoniae (strain CGSP14).